The primary structure comprises 189 residues: Thioredoxin-like protein CITRX, chloroplastic (189 aa).

A chloroplast-targeting transit peptide spans 1-56 (MAMAAAASLLPASAAPTLPGRAFRPPRNSTPTASLSCDGGSRCRGVGLGVILGGCR). The Thioredoxin domain occupies 72–189 (GSGKYIAPDY…MIRNIIDNEL (118 aa)). Catalysis depends on nucleophile residues C112 and C115. C112 and C115 are joined by a disulfide.

The protein belongs to the thioredoxin family. Plant CITRX-type subfamily.

The protein resides in the plastid. It is found in the chloroplast. Probable thiol-disulfide oxidoreductase that may play a role in proper chloroplast development. The protein is Thioredoxin-like protein CITRX, chloroplastic of Oryza sativa subsp. japonica (Rice).